Here is a 258-residue protein sequence, read N- to C-terminus: MLLVLVVLIPVLVSSGGPEGHYEMLGTCRMVCDPYPARGPGAGARTDGGDALSEQSGAPPPSTLVQGPQGKPGRTGKPGPPGPPGDPGPPGPVGPPGEKGEPGKPGPPGLPGAGGSGAISTATYTTVPRVAFYAGLKNPHEGYEVLKFDDVVTNLGNNYDAASGKFTCNIPGTYFFTYHVLMRGGDGTSMWADLCKNGQVRASAIAQDADQNYDYASNSVILHLDAGDEVFIKLDGGKAHGGNSNKYSTFSGFIIYSD.

The N-terminal stretch at 1–16 (MLLVLVVLIPVLVSSG) is a signal peptide. Positions 39-117 (GPGAGARTDG…PGLPGAGGSG (79 aa)) are disordered. Low complexity predominate over residues 67–77 (GPQGKPGRTGK). The 49-residue stretch at 67–115 (GPQGKPGRTGKPGPPGPPGDPGPPGPVGPPGEKGEPGKPGPPGLPGAGG) folds into the Collagen-like domain. Residues 78-95 (PGPPGPPGDPGPPGPVGP) show a composition bias toward pro residues. One can recognise a C1q domain in the interval 125–258 (TTVPRVAFYA…TFSGFIIYSD (134 aa)).

In terms of assembly, interacts with ADGRB3. Forms heterooligomers with C1QL4, when proteins are coexpressed; this interaction does not occur after secretion. Expressed in brainstem.

Its subcellular location is the secreted. In terms of biological role, may regulate the number of excitatory synapses that are formed on hippocampus neurons. Has no effect on inhibitory synapses. This Homo sapiens (Human) protein is C1q-related factor (C1QL1).